The sequence spans 266 residues: Large ribosomal subunit protein uL2c (266 aa).

A disordered region spans residues 1 to 24 (MAIHLYKTSTPSTRNGTVDSQVKS). Residues 7–24 (KTSTPSTRNGTVDSQVKS) show a composition bias toward polar residues.

This sequence belongs to the universal ribosomal protein uL2 family. In terms of assembly, part of the 50S ribosomal subunit.

The protein resides in the plastid. Its subcellular location is the chloroplast. This Nicotiana debneyi (Debney's tobacco) protein is Large ribosomal subunit protein uL2c (rpl2).